The following is a 583-amino-acid chain: Putative glutaminase 3 (583 aa).

Positions 1 to 29 are disordered; that stretch reads MDNKEKEDEELSDELKDQPGPSEKPRTPT. The substrate site is built by S216, N265, E311, N318, Y344, Y396, and V414. 3 ANK repeats span residues 482–514, 515–548, and 549–581; these read DGQN…CKDY, DDRT…PCDR, and YDRT…LKGQ.

It belongs to the glutaminase family.

It carries out the reaction L-glutamine + H2O = L-glutamate + NH4(+). This chain is Putative glutaminase 3 (glna-3), found in Caenorhabditis elegans.